A 241-amino-acid chain; its full sequence is Methylthioribulose-1-phosphate dehydratase (241 aa).

Residue C102 coordinates substrate. Residues H120, H122, and H199 each contribute to the Zn(2+) site.

The protein belongs to the aldolase class II family. MtnB subfamily. Zn(2+) is required as a cofactor.

It localises to the cytoplasm. It catalyses the reaction 5-(methylsulfanyl)-D-ribulose 1-phosphate = 5-methylsulfanyl-2,3-dioxopentyl phosphate + H2O. The protein operates within amino-acid biosynthesis; L-methionine biosynthesis via salvage pathway; L-methionine from S-methyl-5-thio-alpha-D-ribose 1-phosphate: step 2/6. Functionally, catalyzes the dehydration of methylthioribulose-1-phosphate (MTRu-1-P) into 2,3-diketo-5-methylthiopentyl-1-phosphate (DK-MTP-1-P). This chain is Methylthioribulose-1-phosphate dehydratase, found in Coprinopsis cinerea (strain Okayama-7 / 130 / ATCC MYA-4618 / FGSC 9003) (Inky cap fungus).